Consider the following 491-residue polypeptide: UDP-N-acetylmuramate--L-alanine ligase (491 aa).

Residue 126 to 132 coordinates ATP; sequence GTHGKTT.

The protein belongs to the MurCDEF family.

Its subcellular location is the cytoplasm. The catalysed reaction is UDP-N-acetyl-alpha-D-muramate + L-alanine + ATP = UDP-N-acetyl-alpha-D-muramoyl-L-alanine + ADP + phosphate + H(+). It participates in cell wall biogenesis; peptidoglycan biosynthesis. In terms of biological role, cell wall formation. In Salmonella choleraesuis (strain SC-B67), this protein is UDP-N-acetylmuramate--L-alanine ligase.